The sequence spans 708 residues: Metal-pseudopaline receptor CntO (708 aa).

A signal peptide spans 1-21; that stretch reads MRVSVSLVLGVGLGCSSPALW. Residues 63-169 form the TBDR plug domain; sequence RIEDIPQAIS…PGGTVNLVTK (107 aa). The region spanning 174-708 is the TBDR beta-barrel domain; the sequence is ERFARLHASA…NLTMSLTLNY (535 aa).

Belongs to the TonB-dependent receptor family.

The protein resides in the cell outer membrane. Transports the metallophore pseudopaline, which is involved in the acquisition of nickel and zinc, and thus enables bacterial growth inside the host, where metal access is limited. Is probably involved in the import of pseudopaline-metal complexes. This Pseudomonas aeruginosa (strain ATCC 15692 / DSM 22644 / CIP 104116 / JCM 14847 / LMG 12228 / 1C / PRS 101 / PAO1) protein is Metal-pseudopaline receptor CntO.